We begin with the raw amino-acid sequence, 390 residues long: Chalcone synthase (390 aa).

Cysteine 164 is a catalytic residue.

The protein belongs to the thiolase-like superfamily. Chalcone/stilbene synthases family.

The enzyme catalyses (E)-4-coumaroyl-CoA + 3 malonyl-CoA + 3 H(+) = 2',4,4',6'-tetrahydroxychalcone + 3 CO2 + 4 CoA. The protein operates within secondary metabolite biosynthesis; flavonoid biosynthesis. In terms of biological role, the primary product of this enzyme is 4,2',4',6'-tetrahydroxychalcone (also termed naringenin-chalcone or chalcone) which can under specific conditions spontaneously isomerize into naringenin. The protein is Chalcone synthase (CHS) of Onobrychis viciifolia (Common sainfoin).